We begin with the raw amino-acid sequence, 413 residues long: Multifunctional CCA protein (413 aa).

ATP-binding residues include Gly-8 and Arg-11. CTP-binding residues include Gly-8 and Arg-11. Residues Asp-21 and Asp-23 each contribute to the Mg(2+) site. Positions 91, 137, and 140 each coordinate ATP. Residues Arg-91, Arg-137, and Arg-140 each coordinate CTP. The HD domain occupies 225–326 (TGVHVMMVID…ANLLQGVDAY (102 aa)).

It belongs to the tRNA nucleotidyltransferase/poly(A) polymerase family. Bacterial CCA-adding enzyme type 1 subfamily. As to quaternary structure, monomer. Can also form homodimers and oligomers. Requires Mg(2+) as cofactor. Ni(2+) serves as cofactor.

The catalysed reaction is a tRNA precursor + 2 CTP + ATP = a tRNA with a 3' CCA end + 3 diphosphate. It catalyses the reaction a tRNA with a 3' CCA end + 2 CTP + ATP = a tRNA with a 3' CCACCA end + 3 diphosphate. Functionally, catalyzes the addition and repair of the essential 3'-terminal CCA sequence in tRNAs without using a nucleic acid template. Adds these three nucleotides in the order of C, C, and A to the tRNA nucleotide-73, using CTP and ATP as substrates and producing inorganic pyrophosphate. tRNA 3'-terminal CCA addition is required both for tRNA processing and repair. Also involved in tRNA surveillance by mediating tandem CCA addition to generate a CCACCA at the 3' terminus of unstable tRNAs. While stable tRNAs receive only 3'-terminal CCA, unstable tRNAs are marked with CCACCA and rapidly degraded. In Nitrosospira multiformis (strain ATCC 25196 / NCIMB 11849 / C 71), this protein is Multifunctional CCA protein.